A 239-amino-acid polypeptide reads, in one-letter code: uncharacterized protein (239 aa).

This is an uncharacterized protein from Homo sapiens (Human).